Reading from the N-terminus, the 430-residue chain is Serine/threonine-protein kinase Sgk1 (430 aa).

The tract at residues 1–60 (MTVKTEAARSTLTYSRMRGMVAILIAFMKQRRMGLNDFIQKLANNSYACKHPEVQSYLKI) is necessary for localization to the mitochondria. Positions 66–92 (PELMNANPSPPPSPSQQINLGPSSNPH) are disordered. Ser74 is subject to Phosphoserine. Ser78 is subject to Phosphoserine; by MAPK7. Polar residues predominate over residues 81 to 91 (QQINLGPSSNP). The region spanning 98 to 354 (FHFLKVIGKG…FMEIKSHIFF (257 aa)) is the Protein kinase domain. Residues 104 to 112 (IGKGSFGKV) and Lys127 contribute to the ATP site. The Nuclear localization signal signature appears at 131-141 (KKAILKKKEEK). Asp222 (proton acceptor) is an active-site residue. Thr256 carries the phosphothreonine; by PDPK1 modification. In terms of domain architecture, AGC-kinase C-terminal spans 355–430 (SLINWDDLIN…SYAPPMDSFL (76 aa)). A Phosphothreonine; by PKA modification is found at Thr368. Phosphoserine occurs at positions 396, 400, and 421.

Belongs to the protein kinase superfamily. AGC Ser/Thr protein kinase family. As to quaternary structure, homodimer; disulfide-linked. Forms a trimeric complex with FBXW7 and NOTCH1. Interacts with MAPK3/ERK1, MAPK1/ERK2, MAP2K1/MEK1, MAP2K2/MEK2, NEDD4, NEDD4L, MAPK7, CREB1, SLC9A3R2/NHERF2 and KCNJ1/ROMK1. Associates with the mammalian target of rapamycin complex 2 (mTORC2) via an interaction with MAPKAP1/SIN1. Interacts with MAPT/TAU. In terms of processing, regulated by phosphorylation. Activated by phosphorylation on Ser-421 by mTORC2, transforming it into a substrate for PDPK1 which phosphorylates it on Thr-256. Phosphorylation on Ser-396 and Ser-400 are also essential for its activity. Phosphorylation on Ser-78 by MAPK7 is required for growth factor-induced cell cycle progression. Post-translationally, ubiquitinated by NEDD4L; which promotes proteasomal degradation. Ubiquitinated by SYVN1 at the endoplasmic reticulum; which promotes rapid proteasomal degradation and maintains a high turnover rate in resting cells. As to expression, expressed in most tissues with highest levels in the ovary, thymus and lung. In the kidney, expressed within glomeruli of the cortex, at low levels in outer medulla and moderate levels in inner medulla and papilla.

It is found in the cytoplasm. Its subcellular location is the nucleus. The protein resides in the endoplasmic reticulum membrane. It localises to the cell membrane. The protein localises to the mitochondrion. It carries out the reaction L-seryl-[protein] + ATP = O-phospho-L-seryl-[protein] + ADP + H(+). It catalyses the reaction L-threonyl-[protein] + ATP = O-phospho-L-threonyl-[protein] + ADP + H(+). With respect to regulation, two specific sites, one in the kinase domain (Thr-256) and the other in the C-terminal regulatory region (Ser-421), need to be phosphorylated for its full activation. Phosphorylation at Ser-396 and Ser-400 are also essential for its activity. Activated by WNK1, WNK2, WNK3 and WNK4. Functionally, serine/threonine-protein kinase which is involved in the regulation of a wide variety of ion channels, membrane transporters, cellular enzymes, transcription factors, neuronal excitability, cell growth, proliferation, survival, migration and apoptosis. Plays an important role in cellular stress response. Contributes to regulation of renal Na(+) retention, renal K(+) elimination, salt appetite, gastric acid secretion, intestinal Na(+)/H(+) exchange and nutrient transport, insulin-dependent salt sensitivity of blood pressure, salt sensitivity of peripheral glucose uptake, cardiac repolarization and memory consolidation. Up-regulates Na(+) channels: SCNN1A/ENAC, SCN5A and ASIC1/ACCN2, K(+) channels: KCNJ1/ROMK1, KCNA1-5, KCNQ1-5 and KCNE1, epithelial Ca(2+) channels: TRPV5 and TRPV6, chloride channels: BSND, CLCN2 and CFTR, glutamate transporters: SLC1A3/EAAT1, SLC1A2 /EAAT2, SLC1A1/EAAT3, SLC1A6/EAAT4 and SLC1A7/EAAT5, amino acid transporters: SLC1A5/ASCT2, SLC38A1/SN1 and SLC6A19, creatine transporter: SLC6A8, Na(+)/dicarboxylate cotransporter: SLC13A2/NADC1, Na(+)-dependent phosphate cotransporter: SLC34A2/NAPI-2B, glutamate receptor: GRIK2/GLUR6. Up-regulates carriers: SLC9A3/NHE3, SLC12A1/NKCC2, SLC12A3/NCC, SLC5A3/SMIT, SLC2A1/GLUT1, SLC5A1/SGLT1 and SLC15A2/PEPT2. Regulates enzymes: GSK3A/B, PMM2 and Na(+)/K(+) ATPase, and transcription factors: CTNNB1 and nuclear factor NF-kappa-B. Stimulates sodium transport into epithelial cells by enhancing the stability and expression of SCNN1A/ENAC. This is achieved by phosphorylating the NEDD4L ubiquitin E3 ligase, promoting its interaction with 14-3-3 proteins, thereby preventing it from binding to SCNN1A/ENAC and targeting it for degradation. Regulates store-operated Ca(+2) entry (SOCE) by stimulating ORAI1 and STIM1. Regulates KCNJ1/ROMK1 directly via its phosphorylation or indirectly via increased interaction with SLC9A3R2/NHERF2. Phosphorylates MDM2 and activates MDM2-dependent ubiquitination of p53/TP53. Phosphorylates SLC2A4/GLUT4 and up-regulates its activity. Phosphorylates APBB1/FE65 and promotes its localization to the nucleus. Phosphorylates FBXW7 and plays an inhibitory role in the NOTCH1 signaling. Phosphorylates FOXO1 resulting in its relocalization from the nucleus to the cytoplasm. Phosphorylates FOXO3, promoting its exit from the nucleus and interference with FOXO3-dependent transcription. Phosphorylates BRAF and MAP3K3/MEKK3 and inhibits their activity. Phosphorylates SLC9A3/NHE3 in response to dexamethasone, resulting in its activation and increased localization at the cell membrane. Phosphorylates CREB1. Necessary for vascular remodeling during angiogenesis. Phosphorylates MAPT/TAU and mediates microtubule depolymerization and neurite formation in hippocampal neurons. Phosphorylates MAPK1/ERK2 and activates it by enhancing its interaction with MAP2K1/MEK1 and MAP2K2/MEK2. May also play an important role in the development of particular groups of neurons in the postnatal brain. This is Serine/threonine-protein kinase Sgk1 (Sgk1) from Rattus norvegicus (Rat).